The chain runs to 526 residues: Transcription factor MYC1 (526 aa).

The interval 330–351 (MFPSQNSGLNQDDPSDRRKENE) is disordered. Residues 332-341 (PSQNSGLNQD) show a composition bias toward polar residues. The bHLH domain occupies 333–382 (SQNSGLNQDDPSDRRKENEKFSVLRTMVPTVNEVDKESILNNTIKYLQEL).

In terms of assembly, homodimer. Interacts with MYB75/PAP1, MYB90/PAP2, MYB4, MYB5, MYB6, MYB23, MYB82, MYB113, MYB114, TT2, MYB0/GL1, and MYB66/WER. In terms of tissue distribution, mostly expressed in developing seeds. Also detected in stems and leaves.

Its subcellular location is the nucleus. Functionally, trancsription activator, when associated with MYB75/PAP1 or MYB90/PAP2. This Arabidopsis thaliana (Mouse-ear cress) protein is Transcription factor MYC1 (BHLH12).